The sequence spans 295 residues: Diaminopimelate epimerase (295 aa).

The substrate site is built by Asn-13, Gln-46, and Asn-66. Cys-75 functions as the Proton donor in the catalytic mechanism. Substrate-binding positions include Gly-76–Asn-77, Asn-162, Asn-195, and Glu-213–Arg-214. Cys-222 (proton acceptor) is an active-site residue. Gly-223–Thr-224 serves as a coordination point for substrate.

This sequence belongs to the diaminopimelate epimerase family. In terms of assembly, homodimer.

It is found in the cytoplasm. It carries out the reaction (2S,6S)-2,6-diaminopimelate = meso-2,6-diaminopimelate. The protein operates within amino-acid biosynthesis; L-lysine biosynthesis via DAP pathway; DL-2,6-diaminopimelate from LL-2,6-diaminopimelate: step 1/1. In terms of biological role, catalyzes the stereoinversion of LL-2,6-diaminopimelate (L,L-DAP) to meso-diaminopimelate (meso-DAP), a precursor of L-lysine and an essential component of the bacterial peptidoglycan. The sequence is that of Diaminopimelate epimerase from Psychrobacter arcticus (strain DSM 17307 / VKM B-2377 / 273-4).